We begin with the raw amino-acid sequence, 138 residues long: uncharacterized protein (138 aa).

This is an uncharacterized protein from Methanocaldococcus jannaschii (strain ATCC 43067 / DSM 2661 / JAL-1 / JCM 10045 / NBRC 100440) (Methanococcus jannaschii).